The following is a 275-amino-acid chain: Two-component response regulator PprB (275 aa).

The Response regulatory domain occupies 10-128 (SVLIIDDEPQ…ELLHGLERLE (119 aa)). Asp60 bears the 4-aspartylphosphate mark. The interval 173-205 (SQPSALRSEDSQPSAPPAPVAESQVSPSNPLFG) is disordered. The HTH luxR-type domain occupies 200 to 265 (SNPLFGKLSP…QLALALSPAA (66 aa)). Residues 224–243 (NYQIAYELGITENTVKLYVS) constitute a DNA-binding region (H-T-H motif).

Phosphorylated by PprA.

In terms of biological role, member of the two-component regulatory system PprA/PprB involved in biofilm formation by controlling the expression of many related genes including type IVb pili major subunit flp pilin, adhesin bapA or cupE fimbriae. Functions as a transcription regulator by direct binding to promoter regions. Negatively regulates its own transcription. The chain is Two-component response regulator PprB from Pseudomonas aeruginosa (strain ATCC 15692 / DSM 22644 / CIP 104116 / JCM 14847 / LMG 12228 / 1C / PRS 101 / PAO1).